Consider the following 264-residue polypeptide: Fibroblast growth factor 5 (264 aa).

Positions 1 to 20 (MSLSLLFLIFCSHLIHSAWA) are cleaved as a signal peptide. Residues 25–81 (RLTPEGQPAPPRNPGDSSGSRGRSSATFSSSSASSPVAASPGSQGSGSEHSSFQWSP) are disordered. Residues 38-72 (PGDSSGSRGRSSATFSSSSASSPVAASPGSQGSGS) show a composition bias toward low complexity. N-linked (GlcNAc...) asparagine glycosylation is present at Asn108. Residues 227–254 (FTVTVPEKKKPPVKPKVPLSQPRRSPSP) are disordered.

This sequence belongs to the heparin-binding growth factors family. Interacts with FGFR1 and FGFR2. Affinity between fibroblast growth factors (FGFs) and their receptors is increased by heparan sulfate glycosaminoglycans that function as coreceptors.

The protein localises to the secreted. Plays an important role in the regulation of cell proliferation and cell differentiation. Required for normal regulation of the hair growth cycle. Functions as an inhibitor of hair elongation by promoting progression from anagen, the growth phase of the hair follicle, into catagen the apoptosis-induced regression phase. In Mus musculus (Mouse), this protein is Fibroblast growth factor 5 (Fgf5).